Consider the following 470-residue polypeptide: Uronate isomerase (470 aa).

It belongs to the metallo-dependent hydrolases superfamily. Uronate isomerase family.

It carries out the reaction D-glucuronate = D-fructuronate. The enzyme catalyses aldehydo-D-galacturonate = keto-D-tagaturonate. Its pathway is carbohydrate metabolism; pentose and glucuronate interconversion. The sequence is that of Uronate isomerase from Escherichia coli O157:H7 (strain EC4115 / EHEC).